Here is a 249-residue protein sequence, read N- to C-terminus: Zinc finger AN1 and C2H2 domain-containing stress-associated protein 13 (249 aa).

AN1-type zinc fingers lie at residues 7–55 (PDLG…RGDV) and 95–145 (AVKK…KPES). Zn(2+) contacts are provided by Cys13, Cys18, Cys28, Cys31, Cys36, His39, His45, Cys47, Cys101, Cys106, Cys118, Cys121, Cys126, His129, His135, and Cys137. The interval 194–213 (FASGNDGNSEKTQERNGKQN) is disordered. Positions 201-210 (NSEKTQERNG) are enriched in basic and acidic residues. The C2H2-type zinc finger occupies 220-243 (DVCPKCSRGFRDPVDLLKHIDKDH).

Functionally, may be involved in environmental stress response. This chain is Zinc finger AN1 and C2H2 domain-containing stress-associated protein 13 (SAP13), found in Arabidopsis thaliana (Mouse-ear cress).